A 549-amino-acid polypeptide reads, in one-letter code: Alanine aminotransferase 2-like (549 aa).

Lys367 bears the N6-(pyridoxal phosphate)lysine mark.

The protein belongs to the class-I pyridoxal-phosphate-dependent aminotransferase family. Alanine aminotransferase subfamily. In terms of assembly, homodimer. The cofactor is pyridoxal 5'-phosphate.

It carries out the reaction L-alanine + 2-oxoglutarate = pyruvate + L-glutamate. Its pathway is amino-acid degradation; L-alanine degradation via transaminase pathway; pyruvate from L-alanine: step 1/1. Its function is as follows. Catalyzes the reversible transamination between alanine and 2-oxoglutarate to form pyruvate and glutamate. The protein is Alanine aminotransferase 2-like (gpt2l) of Danio rerio (Zebrafish).